The chain runs to 341 residues: Paired box protein Pax-9 (341 aa).

A DNA-binding region (paired) is located at residues 4–130 (AFGEVNQLGG…SSISRILRNK (127 aa)). The segment at 7–63 (EVNQLGGVFVNGRPLPNAIRLRIVELAQLGIRPCDISRQLRVSHGCVSKILARYNET) is PAI subdomain. An RED subdomain region spans residues 82–130 (TVVKHIRTYKQRDPGIFAWEIRDRLLADGVCDKYNVPSVSSISRILRNK). The interval 168-189 (AAAAKVPTPPGVPAIPGSVAMP) is interaction with KDM5B.

As to quaternary structure, interacts with KDM5B.

The protein localises to the nucleus. Its function is as follows. Transcription factor required for normal development of thymus, parathyroid glands, ultimobranchial bodies, teeth, skeletal elements of skull and larynx as well as distal limbs. In Daubentonia madagascariensis (Aye-aye), this protein is Paired box protein Pax-9 (PAX9).